The following is a 215-amino-acid chain: Nascent polypeptide-associated complex subunit alpha (215 aa).

The disordered stretch occupies residues 1–81 (MPGEATETVP…SEKKARKAMS (81 aa)). The span at 9–28 (VPATEQELPQPQAETGSGTE) shows a compositional bias: polar residues. A compositionally biased stretch (acidic residues) spans 29–40 (SDSDESVPELEG). The residue at position 43 (S43) is a Phosphoserine; by ILK1. The segment covering 44–57 (TQATTQQAQLAAAA) has biased composition (low complexity). The interval 69 to 80 (QSRSEKKARKAM) is required for DNA-binding. Positions 70–135 (SRSEKKARKA…AKIEDLSQQA (66 aa)) constitute an NAC-A/B domain. The tract at residues 93 to 108 (RVTIRKSKNILFVITK) is RNA/DNA-binding. At S132 the chain carries Phosphoserine. K142 bears the N6-acetyllysine; alternate mark. K142 is covalently cross-linked (Glycyl lysine isopeptide (Lys-Gly) (interchain with G-Cter in SUMO2); alternate). The residue at position 159 (T159) is a Phosphothreonine; by GSK3-beta. Residue T161 is modified to Phosphothreonine. 4 positions are modified to phosphoserine: S166, S186, S191, and S203. Residues 176–213 (VEVKDIEWVMSQANVSRAKAVRALKNNSNNIVNAIMEL) enclose the UBA domain.

This sequence belongs to the NAC-alpha family. As to quaternary structure, part of the nascent polypeptide-associated complex (NAC), which is a heterodimer of NACA and BTF3 (via NAC-A/B domains). NAC associates with ribosomes through the BTF3/NACB subunit and contacts the ribosomal protein L23, which is positioned near the exiting site. Both subunits can contact nascent polypeptide chains. NACA may also form homodimers, and only this form binds DNA. Interacts with TBP and JUN. Post-translationally, phosphorylation of Ser-43 by ILK during cell adhesion may promote nuclear localization. Phosphorylation of Thr-159 by GSK3B may promote proteasome mediated degradation.

It is found in the cytoplasm. The protein localises to the nucleus. Functionally, prevents inappropriate targeting of non-secretory polypeptides to the endoplasmic reticulum (ER). Binds to nascent polypeptide chains as they emerge from the ribosome and blocks their interaction with the signal recognition particle (SRP), which normally targets nascent secretory peptides to the ER. Also reduces the inherent affinity of ribosomes for protein translocation sites in the ER membrane (M sites). May act as a specific coactivator for JUN, binding to DNA and stabilizing the interaction of JUN homodimers with target gene promoters. The sequence is that of Nascent polypeptide-associated complex subunit alpha from Chinchilla lanigera (Long-tailed chinchilla).